A 289-amino-acid chain; its full sequence is Nitrogenase iron protein (289 aa).

8 to 15 contacts ATP; the sequence is GKGGIGKS. Cysteine 96 is a [4Fe-4S] cluster binding site. Arginine 99 bears the ADP-ribosylarginine; by dinitrogenase reductase ADP-ribosyltransferase mark. Cysteine 130 is a [4Fe-4S] cluster binding site.

This sequence belongs to the NifH/BchL/ChlL family. In terms of assembly, homodimer. The cofactor is [4Fe-4S] cluster. Post-translationally, the reversible ADP-ribosylation of Arg-99 inactivates the nitrogenase reductase and regulates nitrogenase activity.

It carries out the reaction N2 + 8 reduced [2Fe-2S]-[ferredoxin] + 16 ATP + 16 H2O = H2 + 8 oxidized [2Fe-2S]-[ferredoxin] + 2 NH4(+) + 16 ADP + 16 phosphate + 6 H(+). In terms of biological role, the key enzymatic reactions in nitrogen fixation are catalyzed by the nitrogenase complex, which has 2 components: the iron protein and the molybdenum-iron protein. This Parafrankia sp. (strain EAN1pec) protein is Nitrogenase iron protein.